The sequence spans 196 residues: Large ribosomal subunit protein bL25 (196 aa).

Belongs to the bacterial ribosomal protein bL25 family. CTC subfamily. Part of the 50S ribosomal subunit; part of the 5S rRNA/L5/L18/L25 subcomplex. Contacts the 5S rRNA. Binds to the 5S rRNA independently of L5 and L18.

This is one of the proteins that binds to the 5S RNA in the ribosome where it forms part of the central protuberance. The protein is Large ribosomal subunit protein bL25 of Treponema pallidum subsp. pallidum (strain SS14).